A 320-amino-acid chain; its full sequence is UV DNA damage endonuclease (320 aa).

It belongs to the uve1/UvsE family.

In terms of biological role, component in a DNA repair pathway. Removal of UV LIGHT damaged nucleotides. Recognizes pyrimidine dimers and cleave a phosphodiester bond immediately 5' to the lesion. This chain is UV DNA damage endonuclease, found in Bacillus velezensis (strain DSM 23117 / BGSC 10A6 / LMG 26770 / FZB42) (Bacillus amyloliquefaciens subsp. plantarum).